The chain runs to 291 residues: Oxidative stress-responsive serine-rich protein 1 (291 aa).

The disordered stretch occupies residues 44-139 (RTTVDDTKPK…STGENSTSLD (96 aa)). Residues 65–83 (STRKSSRGAVRIQRRRRSK) are compositionally biased toward basic residues. 2 stretches are compositionally biased toward polar residues: residues 95–113 (CSTT…SQTE) and 127–139 (KEFS…TSLD). Thr143 carries the phosphothreonine modification.

Ubiquitous with high level in testis, placenta and cardiac myocytes. In terms of tissue distribution, expressed in testis, unpreganant uterus and cardiac myocytes.

The sequence is that of Oxidative stress-responsive serine-rich protein 1 (Oser1) from Rattus norvegicus (Rat).